Here is a 212-residue protein sequence, read N- to C-terminus: Probable GTP-binding protein EngB (212 aa).

In terms of domain architecture, EngB-type G spans 38 to 210 (ALPQIAFVGK…KTSLAKCIKL (173 aa)). GTP is bound by residues 46-53 (GKSNVGKS), 73-77 (GRTRQ), 91-94 (DLPG), 158-161 (TKSD), and 189-191 (VSS). Residues Ser53 and Thr75 each contribute to the Mg(2+) site.

Belongs to the TRAFAC class TrmE-Era-EngA-EngB-Septin-like GTPase superfamily. EngB GTPase family. It depends on Mg(2+) as a cofactor.

Necessary for normal cell division and for the maintenance of normal septation. This is Probable GTP-binding protein EngB from Rickettsia bellii (strain OSU 85-389).